A 216-amino-acid polypeptide reads, in one-letter code: Adenylate kinase (216 aa).

Residue 10-15 (GAGKGT) participates in ATP binding. The tract at residues 30-59 (STGDMLREAVKADTPLGIEAKKVMDVGGLI) is NMP. AMP-binding positions include threonine 31, arginine 36, 57–59 (GLI), 85–88 (GFPR), and glutamine 92. Positions 122 to 159 (GRRAHLTSGRTYHIVYNPPKVEGIDDITGEELIQRTDD) are LID. ATP is bound by residues arginine 123 and 132 to 133 (TY). AMP-binding residues include arginine 156 and arginine 167. Residue glycine 202 participates in ATP binding.

This sequence belongs to the adenylate kinase family. As to quaternary structure, monomer.

It localises to the cytoplasm. It carries out the reaction AMP + ATP = 2 ADP. It participates in purine metabolism; AMP biosynthesis via salvage pathway; AMP from ADP: step 1/1. Functionally, catalyzes the reversible transfer of the terminal phosphate group between ATP and AMP. Plays an important role in cellular energy homeostasis and in adenine nucleotide metabolism. The sequence is that of Adenylate kinase from Ruthia magnifica subsp. Calyptogena magnifica.